A 332-amino-acid polypeptide reads, in one-letter code: Protein FAM131B (332 aa).

A disordered region spans residues 1-22; that stretch reads MDSTSSLHGSSLHRPSTEQTRT. Ser-47, Ser-114, and Ser-117 each carry phosphoserine. The interval 221–332 is disordered; sequence LGPAFDDSQP…FDEEEGDANN (112 aa). 2 stretches are compositionally biased toward basic and acidic residues: residues 272 to 281 and 288 to 302; these read PVEEEKRPLA and AGCR…REDP. Residues Ser-295, Ser-297, and Ser-313 each carry the phosphoserine modification. Thr-316 is modified (phosphothreonine). 3 positions are modified to phosphoserine: Ser-317, Ser-318, and Ser-322. The span at 323 to 332 shows a compositional bias: acidic residues; that stretch reads FDEEEGDANN.

This sequence belongs to the FAM131 family.

The chain is Protein FAM131B (Fam131b) from Rattus norvegicus (Rat).